Consider the following 512-residue polypeptide: Reduced folate transporter (512 aa).

N-acetylmethionine is present on methionine 1. Topologically, residues 1–29 are cytoplasmic; it reads MVPTGQVAEKQAYEEPRQDHELKSWRCLV. The helical transmembrane segment at 30–50 threads the bilayer; sequence FYLCFFGFMAQLRPGESFITP. 2 residues coordinate folate: isoleucine 48 and threonine 49. Over 51–62 the chain is Extracellular; the sequence is FLLERKFTKEQV. Residues 63-85 traverse the membrane as a helical segment; sequence TNEIIPMLPYSHLAVLVPVFLLT. Residues 86-89 lie on the Cytoplasmic side of the membrane; that stretch reads DYLR. Residues 90-110 traverse the membrane as a helical segment; sequence YKPVLVLQCLSFVCVWLLLLL. At 111–114 the chain is on the extracellular side; the sequence is GTSV. The helical transmembrane segment at 115–137 threads the bilayer; sequence VHMQLMEVFYSVTMAARIAYSSY. The folate site is built by glutamate 121 and arginine 131. Topologically, residues 138-151 are cytoplasmic; that stretch reads IFSLVHPSRYQRMA. Residues 152-176 form a helical membrane-spanning segment; sequence SYSRAAVLLGVFISSVLGQALVTVG. Valine 162 provides a ligand contact to folate. Residues 177–181 are Extracellular-facing; it reads HISTY. Residues 182-200 form a helical membrane-spanning segment; it reads TLNCVSLGFILFSLVLSLF. Topologically, residues 201 to 266 are cytoplasmic; sequence LKRPKRSLFF…ELVENARQPQ (66 aa). Residues 267 to 292 traverse the membrane as a helical segment; sequence LRLWCLWWVFNSSGYYLITYYVHVLW. Tyrosine 281, tyrosine 282, and tyrosine 286 together coordinate folate. Residues 293–300 lie on the Extracellular side of the membrane; the sequence is RSTDSSLS. The chain crosses the membrane as a helical span at residues 301–323; sequence YNGAVDAASTLLSAITSFSAGFL. The Cytoplasmic portion of the chain corresponds to 324 to 329; sequence SIRWTL. A helical transmembrane segment spans residues 330 to 350; it reads WSKLVIAGVIAIQASLVFCMF. Residues 351–353 lie on the Extracellular side of the membrane; the sequence is QIR. A helical membrane pass occupies residues 354–377; it reads DIWVCYVTFVLFRGAYQFLVPIAT. Folate contacts are provided by arginine 366 and glutamine 370. The Cytoplasmic portion of the chain corresponds to 378–391; that stretch reads FQIASSLSKELCAL. A helical membrane pass occupies residues 392 to 415; sequence VFGINTFLATALKTCITLVVSDKR. Residues 400-412 are required for substrate-binding; the sequence is ATALKTCITLVVS. Residues 416–423 lie on the Extracellular side of the membrane; it reads GLGLQVRD. Residues 424-448 form a helical membrane-spanning segment; the sequence is QFRIYFIYFLMLSITCFAWAGLDGL. Residues 449 to 512 are Cytoplasmic-facing; it reads RYCQRGRHQP…RGDLRVEAKA (64 aa). Phosphoserine occurs at positions 467, 472, and 477. A disordered region spans residues 478–512; that stretch reads LQDGDLRGPQPSAPQLLSEDGMEDDRGDLRVEAKA.

Belongs to the reduced folate carrier (RFC) transporter (TC 2.A.48) family.

It localises to the cell membrane. The protein localises to the apical cell membrane. The protein resides in the basolateral cell membrane. The catalysed reaction is 5-amino-1-(5-phospho-beta-D-ribosyl)imidazole-4-carboxamide(in) + (6S)-5-methyl-5,6,7,8-tetrahydrofolate(out) = 5-amino-1-(5-phospho-beta-D-ribosyl)imidazole-4-carboxamide(out) + (6S)-5-methyl-5,6,7,8-tetrahydrofolate(in). Its function is as follows. Antiporter that mediates the import of reduced folates, driven by the export of organic anions. Also acts as an importer of immunoreactive cyclic dinucleotides, but with a lower transporter activity. Mechanistically, acts as a secondary active transporter, which exports intracellular organic anions down their concentration gradients to facilitate the uptake of its substrates. Has high affinity for N5-methyltetrahydrofolate, the predominant circulating form of folate. Also mediates the import of antifolate drug methotrexate. 5-amino-4-imidazolecarboxamide riboside (AICAR), when phosphorylated to AICAR monophosphate, can serve as an organic anion for antiporter activity. This is Reduced folate transporter from Mus musculus (Mouse).